Consider the following 176-residue polypeptide: Translation initiation factor IF-3 (176 aa).

This sequence belongs to the IF-3 family. In terms of assembly, monomer.

The protein resides in the cytoplasm. IF-3 binds to the 30S ribosomal subunit and shifts the equilibrium between 70S ribosomes and their 50S and 30S subunits in favor of the free subunits, thus enhancing the availability of 30S subunits on which protein synthesis initiation begins. The polypeptide is Translation initiation factor IF-3 (Streptococcus mutans serotype c (strain ATCC 700610 / UA159)).